The chain runs to 927 residues: Isoleucine--tRNA ligase (927 aa).

The 'HIGH' region motif lies at 57-67 (PYANGHIHIGH). E561 is a binding site for L-isoleucyl-5'-AMP. The short motif at 602-606 (KMSKS) is the 'KMSKS' region element. Residue K605 participates in ATP binding. Zn(2+) is bound by residues C897, C900, C917, and C920.

The protein belongs to the class-I aminoacyl-tRNA synthetase family. IleS type 1 subfamily. Monomer. It depends on Zn(2+) as a cofactor.

The protein resides in the cytoplasm. The enzyme catalyses tRNA(Ile) + L-isoleucine + ATP = L-isoleucyl-tRNA(Ile) + AMP + diphosphate. Functionally, catalyzes the attachment of isoleucine to tRNA(Ile). As IleRS can inadvertently accommodate and process structurally similar amino acids such as valine, to avoid such errors it has two additional distinct tRNA(Ile)-dependent editing activities. One activity is designated as 'pretransfer' editing and involves the hydrolysis of activated Val-AMP. The other activity is designated 'posttransfer' editing and involves deacylation of mischarged Val-tRNA(Ile). The sequence is that of Isoleucine--tRNA ligase from Syntrophotalea carbinolica (strain DSM 2380 / NBRC 103641 / GraBd1) (Pelobacter carbinolicus).